The chain runs to 965 residues: Klaroid protein (965 aa).

Residues Met1–Phe20 are disordered. 2 helical membrane-spanning segments follow: residues Thr303–Leu323 and Phe343–Gln363. Residues Ser585–Glu612 are a coiled coil. Residues Gly801–Pro963 enclose the SUN domain.

As to quaternary structure, core component of the LINC complex which is composed of inner nuclear membrane SUN domain-containing proteins coupled to outer nuclear membrane KASH domain-containing nesprins. Expressed in all cells in the eye disk.

The protein resides in the membrane. Its subcellular location is the cytoplasm. It is found in the cytoskeleton. The protein localises to the microtubule organizing center. It localises to the perinuclear region. Component of the LINC (LInker of Nucleoskeleton and Cytoskeleton) complex involved in the connection between the nuclear lamina and the cytoskeleton. Is required to nuclear migration in eye and to anchor klar in the nuclear membrane. The protein is Klaroid protein of Drosophila melanogaster (Fruit fly).